We begin with the raw amino-acid sequence, 115 residues long: DNA-binding protein PH1060 (115 aa).

Belongs to the PDCD5 family.

This chain is DNA-binding protein PH1060, found in Pyrococcus horikoshii (strain ATCC 700860 / DSM 12428 / JCM 9974 / NBRC 100139 / OT-3).